Consider the following 134-residue polypeptide: Fluoride-specific ion channel FluC 2 (134 aa).

The next 4 helical transmembrane spans lie at 1–21, 28–48, 68–88, and 92–112; these read MNYF…EITG, IFPV…LFFM, GFLG…LLLF, and LLIG…SGIL. Na(+) contacts are provided by G71 and T74.

It belongs to the fluoride channel Fluc/FEX (TC 1.A.43) family.

Its subcellular location is the cell membrane. The enzyme catalyses fluoride(in) = fluoride(out). Its activity is regulated as follows. Na(+) is not transported, but it plays an essential structural role and its presence is essential for fluoride channel function. Fluoride-specific ion channel. Important for reducing fluoride concentration in the cell, thus reducing its toxicity. The polypeptide is Fluoride-specific ion channel FluC 2 (Carboxydothermus hydrogenoformans (strain ATCC BAA-161 / DSM 6008 / Z-2901)).